A 137-amino-acid polypeptide reads, in one-letter code: Large-conductance mechanosensitive channel (137 aa).

A run of 2 helical transmembrane segments spans residues 10–30 (FAMRGNVVDLAVGVIIGAAFG) and 76–96 (GAFIQNIFDFVIVAFAIFMAI).

It belongs to the MscL family. As to quaternary structure, homopentamer.

It localises to the cell inner membrane. Its function is as follows. Channel that opens in response to stretch forces in the membrane lipid bilayer. May participate in the regulation of osmotic pressure changes within the cell. This chain is Large-conductance mechanosensitive channel, found in Pectobacterium carotovorum subsp. carotovorum (strain PC1).